A 384-amino-acid polypeptide reads, in one-letter code: Ribonucleoside-diphosphate reductase small chain (384 aa).

Residues aspartate 130, glutamate 161, and histidine 164 each contribute to the Fe cation site. Tyrosine 168 is an active-site residue. Glutamate 224, glutamate 258, and histidine 261 together coordinate Fe cation.

The protein belongs to the ribonucleoside diphosphate reductase small chain family. As to quaternary structure, heterodimer of a large and a small subunit. Fe cation is required as a cofactor.

It carries out the reaction a 2'-deoxyribonucleoside 5'-diphosphate + [thioredoxin]-disulfide + H2O = a ribonucleoside 5'-diphosphate + [thioredoxin]-dithiol. Functionally, provides the precursors necessary for DNA synthesis. Catalyzes the biosynthesis of deoxyribonucleotides from the corresponding ribonucleotides. The chain is Ribonucleoside-diphosphate reductase small chain from Spisula solidissima (Atlantic surf-clam).